A 215-amino-acid chain; its full sequence is Cytochrome b6 (215 aa).

A helical membrane pass occupies residues 32-52 (IFYCLGGITLTCFLVQVATGF). Cys35 contacts heme c. The heme b site is built by His86 and His100. The next 3 membrane-spanning stretches (helical) occupy residues 90-110 (ASMM…TGGF), 116-136 (LTWV…VTGY), and 186-206 (LHTF…FLMI). Heme b-binding residues include His187 and His202.

This sequence belongs to the cytochrome b family. PetB subfamily. As to quaternary structure, the 4 large subunits of the cytochrome b6-f complex are cytochrome b6, subunit IV (17 kDa polypeptide, PetD), cytochrome f and the Rieske protein, while the 4 small subunits are PetG, PetL, PetM and PetN. The complex functions as a dimer. The cofactor is heme b. Heme c is required as a cofactor.

Its subcellular location is the plastid. The protein resides in the chloroplast thylakoid membrane. Functionally, component of the cytochrome b6-f complex, which mediates electron transfer between photosystem II (PSII) and photosystem I (PSI), cyclic electron flow around PSI, and state transitions. This chain is Cytochrome b6, found in Ostreococcus tauri.